The chain runs to 306 residues: Curved DNA-binding protein (306 aa).

The region spanning 5–69 (DYYAIMGVKP…QRRAEYDQMW (65 aa)) is the J domain.

It is found in the cytoplasm. The protein localises to the nucleoid. Functionally, DNA-binding protein that preferentially recognizes a curved DNA sequence. It is probably a functional analog of DnaJ; displays overlapping activities with DnaJ, but functions under different conditions, probably acting as a molecular chaperone in an adaptive response to environmental stresses other than heat shock. Lacks autonomous chaperone activity; binds native substrates and targets them for recognition by DnaK. Its activity is inhibited by the binding of CbpM. This Escherichia coli (strain K12 / MC4100 / BW2952) protein is Curved DNA-binding protein.